A 563-amino-acid polypeptide reads, in one-letter code: CTP synthase (563 aa).

The amidoligase domain stretch occupies residues 1 to 278 (MAKATAKNSA…DLRVLEQLHL (278 aa)). Serine 24 lines the CTP pocket. Residue serine 24 coordinates UTP. ATP is bound at residue 25 to 30 (SLGKGI). L-glutamine is bound at residue tyrosine 65. Aspartate 82 provides a ligand contact to ATP. Positions 82 and 151 each coordinate Mg(2+). CTP is bound by residues 158-160 (DIE), 198-203 (KTKPSQ), and lysine 234. UTP is bound by residues 198-203 (KTKPSQ) and lysine 234. Residue 250 to 252 (KDV) participates in ATP binding. In terms of domain architecture, Glutamine amidotransferase type-1 spans 303–545 (TIALVGKYIA…VKAALEQKKA (243 aa)). Glycine 363 contacts L-glutamine. Cysteine 390 serves as the catalytic Nucleophile; for glutamine hydrolysis. L-glutamine is bound by residues 391 to 394 (LGMQ), glutamate 414, and arginine 471. Catalysis depends on residues histidine 518 and glutamate 520. A disordered region spans residues 542–563 (QKKANGKKPTAPSEKTKKTKTK).

This sequence belongs to the CTP synthase family. Homotetramer.

The catalysed reaction is UTP + L-glutamine + ATP + H2O = CTP + L-glutamate + ADP + phosphate + 2 H(+). It carries out the reaction L-glutamine + H2O = L-glutamate + NH4(+). It catalyses the reaction UTP + NH4(+) + ATP = CTP + ADP + phosphate + 2 H(+). It functions in the pathway pyrimidine metabolism; CTP biosynthesis via de novo pathway; CTP from UDP: step 2/2. With respect to regulation, allosterically activated by GTP, when glutamine is the substrate; GTP has no effect on the reaction when ammonia is the substrate. The allosteric effector GTP functions by stabilizing the protein conformation that binds the tetrahedral intermediate(s) formed during glutamine hydrolysis. Inhibited by the product CTP, via allosteric rather than competitive inhibition. Its function is as follows. Catalyzes the ATP-dependent amination of UTP to CTP with either L-glutamine or ammonia as the source of nitrogen. Regulates intracellular CTP levels through interactions with the four ribonucleotide triphosphates. The sequence is that of CTP synthase from Fibrobacter succinogenes (strain ATCC 19169 / S85).